The sequence spans 639 residues: UvrABC system protein C (639 aa).

The span at 1–16 shows a compositional bias: acidic residues; that stretch reads MTDLPVDEPDRDDGAD. Residues 1-28 form a disordered region; sequence MTDLPVDEPDRDDGADQPDAGADPATPR. Over residues 17–27 the composition is skewed to low complexity; that stretch reads QPDAGADPATP. The 79-residue stretch at 42 to 120 folds into the GIY-YIG domain; the sequence is SSPGVYRMID…IKKLKPRYNI (79 aa). Residues 230 to 265 enclose the UVR domain; the sequence is KALQHDLAKRMDEAAQALDYEQAAIFRDRIKALTNV.

Belongs to the UvrC family. Interacts with UvrB in an incision complex.

It is found in the cytoplasm. Its function is as follows. The UvrABC repair system catalyzes the recognition and processing of DNA lesions. UvrC both incises the 5' and 3' sides of the lesion. The N-terminal half is responsible for the 3' incision and the C-terminal half is responsible for the 5' incision. The chain is UvrABC system protein C from Rhodospirillum rubrum (strain ATCC 11170 / ATH 1.1.1 / DSM 467 / LMG 4362 / NCIMB 8255 / S1).